The sequence spans 346 residues: Cyclin-dependent kinase 7 (346 aa).

At alanine 2 the chain carries N-acetylalanine. The residue at position 7 (serine 7) is a Phosphoserine. Residues 12–295 (YEKLDFLGEG…ATQALKMKYF (284 aa)) enclose the Protein kinase domain. ATP is bound by residues 18 to 26 (LGEGQFATV) and lysine 41. Aspartate 137 serves as the catalytic Proton acceptor. Serine 164 bears the Phosphoserine; by CDK1 and CDK2 mark. Threonine 170 is subject to Phosphothreonine; by CDK2. Phosphoserine is present on serine 321.

The protein belongs to the protein kinase superfamily. CMGC Ser/Thr protein kinase family. CDC2/CDKX subfamily. In terms of assembly, associates primarily with cyclin-H (CCNH) and MAT1 to form the CAK complex. CAK can further associate with the core-TFIIH to form the TFIIH basal transcription factor; this complex is sensitive to UV light. The CAK complex binds to p53/TP53 in response to DNA damage. Interacts with CDK2, SF1/NR5A1, PUF60 and PRKCI. Interacts with HINT1. Phosphorylation of Ser-164 during mitosis inactivates the enzyme. Phosphorylation of Thr-170 is required for activity. Phosphorylated at Ser-164 and Thr-170 by CDK2. Ubiquitous.

Its subcellular location is the nucleus. It is found in the cytoplasm. The protein resides in the perinuclear region. The catalysed reaction is L-seryl-[protein] + ATP = O-phospho-L-seryl-[protein] + ADP + H(+). It catalyses the reaction L-threonyl-[protein] + ATP = O-phospho-L-threonyl-[protein] + ADP + H(+). It carries out the reaction [DNA-directed RNA polymerase] + ATP = phospho-[DNA-directed RNA polymerase] + ADP + H(+). With respect to regulation, inactivated by phosphorylation. Repressed by roscovitine (seliciclib, CYC202), R547 (Ro-4584820) and SNS-032 (BMS-387032). The association of p53/TP53 to the CAK complex in response to DNA damage reduces kinase activity toward CDK2 and RNA polymerase II repetitive C-terminal domain (CTD), thus stopping cell cycle progression. The inactivation by roscovitine promotes caspase-mediated apoptosis in leukemic cells. Specifically inactivated by THZ1. Functionally, serine/threonine kinase involved in cell cycle control and in RNA polymerase II-mediated RNA transcription. Cyclin-dependent kinases (CDKs) are activated by the binding to a cyclin and mediate the progression through the cell cycle. Each different complex controls a specific transition between 2 subsequent phases in the cell cycle. Required for both activation and complex formation of CDK1/cyclin-B during G2-M transition, and for activation of CDK2/cyclins during G1-S transition (but not complex formation). CDK7 is the catalytic subunit of the CDK-activating kinase (CAK) complex. Phosphorylates SPT5/SUPT5H, SF1/NR5A1, POLR2A, p53/TP53, CDK1, CDK2, CDK4, CDK6 and CDK11B/CDK11. Initiates transcription by RNA polymerase II by mediating phosphorylation of POLR2A at 'Ser-5' of the repetitive C-terminal domain (CTD) when POLR2A is in complex with DNA, promoting dissociation from DNA and initiation. CAK activates the cyclin-associated kinases CDK1, CDK2, CDK4 and CDK6 by threonine phosphorylation, thus regulating cell cycle progression. CAK complexed to the core-TFIIH basal transcription factor activates RNA polymerase II by serine phosphorylation of the CTD of POLR2A, allowing its escape from the promoter and elongation of the transcripts. Its expression and activity are constant throughout the cell cycle. Upon DNA damage, triggers p53/TP53 activation by phosphorylation, but is inactivated in turn by p53/TP53; this feedback loop may lead to an arrest of the cell cycle and of the transcription, helping in cell recovery, or to apoptosis. Required for DNA-bound peptides-mediated transcription and cellular growth inhibition. The protein is Cyclin-dependent kinase 7 (CDK7) of Homo sapiens (Human).